The sequence spans 277 residues: Uridine-cytidine kinase 1 (277 aa).

24–32 (GGTASGKST) provides a ligand contact to ATP. The substrate site is built by Asp-81, Tyr-109, His-114, Arg-163, Arg-172, and Gln-180. Asp-209 lines the ATP pocket. Residues 241–277 (NHGRSLKRGVAEHGENPSGSSSNLTKRPLLEPSTRPH) are disordered.

It belongs to the uridine kinase family.

It catalyses the reaction uridine + ATP = UMP + ADP + H(+). The enzyme catalyses cytidine + ATP = CMP + ADP + H(+). Its pathway is pyrimidine metabolism; CTP biosynthesis via salvage pathway; CTP from cytidine: step 1/3. It participates in pyrimidine metabolism; UMP biosynthesis via salvage pathway; UMP from uridine: step 1/1. Its function is as follows. Phosphorylates uridine and cytidine to uridine monophosphate and cytidine monophosphate. Does not phosphorylate deoxyribonucleosides or purine ribonucleosides. Can use ATP or GTP as a phosphate donor. The sequence is that of Uridine-cytidine kinase 1 (uck1) from Danio rerio (Zebrafish).